The primary structure comprises 585 residues: S-antigen protein (585 aa).

The signal sequence occupies residues 1–23 (MNRILSVTLCLFFIYLYIYKTYG). A disordered region spans residues 51-585 (NGKGQKYEDL…NSIINMLIGM (535 aa)). Positions 59-85 (DLEEEKEGENDDEEDSNSEESNNDEEN) are enriched in acidic residues. Over residues 96-113 (QETHGSEDEVSNGREDKV) the composition is skewed to basic and acidic residues. Repeat copies occupy residues 102 to 109 (EDEVSNGR), 110 to 117 (EDKVSNGG), 118 to 125 (EDEVSNGG), 126 to 133 (EDEVSNGR), 134 to 141 (EDKVSNGG), 142 to 149 (EDEVSNGR), 150 to 157 (EDKVSNGG), 158 to 165 (EDEVSNGR), 166 to 173 (EDKVSNGG), 174 to 181 (EDEVSNGR), 182 to 189 (EDKVSNGG), 190 to 197 (EDEVSNGR), 198 to 205 (EDKVSNGR), 206 to 213 (EDKVSNGG), 214 to 221 (EDEVSNGR), 222 to 229 (EDKVSNGR), 230 to 237 (EDKVSNGG), 238 to 245 (EDEVSNGR), 246 to 253 (EDKVSNGG), 254 to 261 (EDEVSNGR), 262 to 269 (EDKVSNGG), 270 to 277 (EDEVSNGR), 278 to 285 (EDKVSNGR), 286 to 293 (EDEVSNGR), 294 to 301 (EDKVSNGG), 302 to 309 (EDEVSNGR), 310 to 317 (EDKVSNGG), 318 to 325 (EDEVSNGR), 326 to 333 (EDKVSNGR), 334 to 341 (EDKVSNGG), 342 to 349 (EDEVSNGR), 350 to 357 (EDKVSNGG), 358 to 365 (EDEVSNGR), 366 to 373 (EDKVSNGR), 374 to 381 (EDKVSNGR), 382 to 389 (EDEVSNGR), 390 to 397 (EDKVSNGG), 398 to 405 (EDEVSNGR), 406 to 413 (EDKVSNGR), 414 to 421 (EDKVSNGG), 422 to 429 (EDEVSNGR), 430 to 437 (EDKVSNGG), 438 to 445 (EDEVSNGR), 446 to 453 (EDKVSNGR), 454 to 461 (EDKVSNGR), 462 to 469 (EDKVSNGG), 470 to 477 (EDEVSNGG), 478 to 485 (EDEVSNGR), 486 to 493 (EDKVSNGG), 494 to 501 (EDEVSNGR), 502 to 509 (EDKVSNGG), 510 to 517 (EDEVSNGR), 518 to 525 (EDKVSNGG), 526 to 533 (EDEVSNGR), 534 to 541 (EDKVSNGR), and 542 to 549 (EDEVSNGR). The 56 X 8 AA tandem repeats of E-D-[EK]-V-S-N-G-[RG] stretch occupies residues 102-549 (EDEVSNGRED…GREDEVSNGR (448 aa)). Positions 117 to 129 (GEDEVSNGGEDEV) are enriched in acidic residues. 2 stretches are compositionally biased toward basic and acidic residues: residues 194–209 (SNGR…EDKV) and 218–233 (SNGR…EDKV). Residues 274–297 (SNGREDKVSNGREDEVSNGREDKV) show a composition bias toward basic and acidic residues. The span at 322–337 (SNGREDKVSNGREDKV) shows a compositional bias: basic and acidic residues. Basic and acidic residues-rich tracts occupy residues 362–393 (SNGR…EDKV) and 402–417 (SNGR…EDKV). Basic and acidic residues predominate over residues 442-465 (SNGREDKVSNGREDKVSNGREDKV). Over residues 469 to 481 (GEDEVSNGGEDEV) the composition is skewed to acidic residues. Basic and acidic residues-rich tracts occupy residues 530–553 (SNGR…EDKG) and 560–569 (ELSHNSESHT). Positions 576 to 585 (NSIINMLIGM) are enriched in low complexity.

Its subcellular location is the parasitophorous vacuole. S antigens are soluble heat-stable proteins present in the sera of some infected individuals. The protein is S-antigen protein of Plasmodium falciparum (isolate 3D7).